Reading from the N-terminus, the 276-residue chain is Small ribosomal subunit protein uS3 (276 aa).

Residues 17–86 (VDEYLAKELD…NPQIDVQDVG (70 aa)) enclose the KH type-2 domain. Residues 193-276 (FQINAPPKEP…AETHGDIQDR (84 aa)) are disordered. Positions 214–227 (EAEPSQAAETQEQQ) are enriched in low complexity. Composition is skewed to basic and acidic residues over residues 228–240 (AGEKKSELDRLLD) and 258–276 (PESRTEMSEAETHGDIQDR).

Belongs to the universal ribosomal protein uS3 family. Part of the 30S ribosomal subunit.

Functionally, binds the lower part of the 30S subunit head. This is Small ribosomal subunit protein uS3 from Methanothrix thermoacetophila (strain DSM 6194 / JCM 14653 / NBRC 101360 / PT) (Methanosaeta thermophila).